Here is a 396-residue protein sequence, read N- to C-terminus: Elongation factor Tu 2 (396 aa).

The 197-residue stretch at 10–206 (KPHINVGTIG…AMDAHIPQPE (197 aa)) folds into the tr-type G domain. The segment at 19-26 (GHVDHGKT) is G1. 19–26 (GHVDHGKT) contacts GTP. Residue Thr-26 participates in Mg(2+) binding. A G2 region spans residues 60 to 64 (GITIA). Residues 81-84 (DCPG) form a G3 region. Residues 81 to 85 (DCPGH) and 136 to 139 (NKAD) contribute to the GTP site. Residues 136–139 (NKAD) are G4. The tract at residues 174-176 (SAL) is G5.

Belongs to the TRAFAC class translation factor GTPase superfamily. Classic translation factor GTPase family. EF-Tu/EF-1A subfamily. As to quaternary structure, monomer.

The protein localises to the cytoplasm. The catalysed reaction is GTP + H2O = GDP + phosphate + H(+). Its function is as follows. GTP hydrolase that promotes the GTP-dependent binding of aminoacyl-tRNA to the A-site of ribosomes during protein biosynthesis. This Halorhodospira halophila (strain DSM 244 / SL1) (Ectothiorhodospira halophila (strain DSM 244 / SL1)) protein is Elongation factor Tu 2.